The sequence spans 161 residues: 3-isopropylmalate dehydratase small subunit (161 aa).

The protein belongs to the LeuD family. LeuD type 2 subfamily. In terms of assembly, heterodimer of LeuC and LeuD.

It catalyses the reaction (2R,3S)-3-isopropylmalate = (2S)-2-isopropylmalate. The protein operates within amino-acid biosynthesis; L-leucine biosynthesis; L-leucine from 3-methyl-2-oxobutanoate: step 2/4. Catalyzes the isomerization between 2-isopropylmalate and 3-isopropylmalate, via the formation of 2-isopropylmaleate. This chain is 3-isopropylmalate dehydratase small subunit, found in Metallosphaera sedula (strain ATCC 51363 / DSM 5348 / JCM 9185 / NBRC 15509 / TH2).